Reading from the N-terminus, the 159-residue chain is 6,7-dimethyl-8-ribityllumazine synthase (159 aa).

5-amino-6-(D-ribitylamino)uracil contacts are provided by residues F22, 57-59 (TYE), and 81-83 (TII). 86–87 (ST) contributes to the (2S)-2-hydroxy-3-oxobutyl phosphate binding site. Residue H89 is the Proton donor of the active site. Residue M114 coordinates 5-amino-6-(D-ribitylamino)uracil. R128 lines the (2S)-2-hydroxy-3-oxobutyl phosphate pocket.

It belongs to the DMRL synthase family. In terms of assembly, forms an icosahedral capsid composed of 60 subunits, arranged as a dodecamer of pentamers.

The enzyme catalyses (2S)-2-hydroxy-3-oxobutyl phosphate + 5-amino-6-(D-ribitylamino)uracil = 6,7-dimethyl-8-(1-D-ribityl)lumazine + phosphate + 2 H2O + H(+). The protein operates within cofactor biosynthesis; riboflavin biosynthesis; riboflavin from 2-hydroxy-3-oxobutyl phosphate and 5-amino-6-(D-ribitylamino)uracil: step 1/2. Its function is as follows. Catalyzes the formation of 6,7-dimethyl-8-ribityllumazine by condensation of 5-amino-6-(D-ribitylamino)uracil with 3,4-dihydroxy-2-butanone 4-phosphate. This is the penultimate step in the biosynthesis of riboflavin. The chain is 6,7-dimethyl-8-ribityllumazine synthase from Buchnera aphidicola subsp. Schizaphis graminum (strain Sg).